The chain runs to 152 residues: Small ribosomal subunit protein uS15 (152 aa).

A compositionally biased stretch (basic residues) spans 1-10 (MARMYARRRG). The disordered stretch occupies residues 1 to 24 (MARMYARRRGTSSSVRPYRKEAPE).

Belongs to the universal ribosomal protein uS15 family. In terms of assembly, part of the 30S ribosomal subunit.

This is Small ribosomal subunit protein uS15 from Methanoculleus marisnigri (strain ATCC 35101 / DSM 1498 / JR1).